The sequence spans 434 residues: Nicotinate phosphoribosyltransferase (434 aa).

At His-242 the chain carries Phosphohistidine; by autocatalysis.

The protein belongs to the NAPRTase family. Post-translationally, transiently phosphorylated on a His residue during the reaction cycle. Phosphorylation strongly increases the affinity for substrates and increases the rate of nicotinate D-ribonucleotide production. Dephosphorylation regenerates the low-affinity form of the enzyme, leading to product release.

It carries out the reaction nicotinate + 5-phospho-alpha-D-ribose 1-diphosphate + ATP + H2O = nicotinate beta-D-ribonucleotide + ADP + phosphate + diphosphate. Its pathway is cofactor biosynthesis; NAD(+) biosynthesis; nicotinate D-ribonucleotide from nicotinate: step 1/1. Catalyzes the synthesis of beta-nicotinate D-ribonucleotide from nicotinate and 5-phospho-D-ribose 1-phosphate at the expense of ATP. The polypeptide is Nicotinate phosphoribosyltransferase (Rhizobium etli (strain ATCC 51251 / DSM 11541 / JCM 21823 / NBRC 15573 / CFN 42)).